Consider the following 163-residue polypeptide: Glutathione peroxidase-like peroxiredoxin HYR1 (163 aa).

C36 functions as the Cysteine sulfenic acid (-SOH) intermediate in the catalytic mechanism. Cysteines 36 and 82 form a disulfide.

It belongs to the glutathione peroxidase family. In terms of assembly, interacts with YAP1 and probably YBP1.

Its subcellular location is the cytoplasm. It localises to the mitochondrion intermembrane space. The protein localises to the peroxisome matrix. It catalyses the reaction a hydroperoxide + [thioredoxin]-dithiol = an alcohol + [thioredoxin]-disulfide + H2O. In terms of biological role, involved in oxidative stress response and redox homeostasis. Functions as a sensor and transducer of hydroperoxide stress. In response to hydroperoxide stress it oxidizes (activates) the transcription activator YAP1, which is involved in transcription activation of genes of the oxidative stress response pathway. May also play a direct role in hydroperoxide scavenging, being the most active of three closely related S.cerevisiae peroxiredoxins (GPX1, GPX2, and HYR1/GPX3) with respect to peroxide and lipid hydroperoxide reduction. The three enzymes are not required for the glutaredoxin-mediated antioxidant function. In the presence of peroxides, HYR1/GPX3 is directly oxidized at Cys-36 to form a cysteine sulfenic acid (-SOH). Cys-36-SOH then forms either an intramolecular disulfide bond (Cys-36 with Cys-82) or a transient, intermolecular disulfide bond with 'Cys-598' of YAP1, which is further resolved into a YAP1 intramolecular disulfide bond ('Cys-303' with 'Cys-598'), which causes its nuclear accumulation and activation, and a reduced Cys-36 in HYR1/GPX3. The protein is Glutathione peroxidase-like peroxiredoxin HYR1 of Saccharomyces cerevisiae (strain ATCC 204508 / S288c) (Baker's yeast).